The chain runs to 257 residues: UPF0246 protein swp_3736 (257 aa).

The protein belongs to the UPF0246 family.

The protein is UPF0246 protein swp_3736 of Shewanella piezotolerans (strain WP3 / JCM 13877).